The following is a 314-amino-acid chain: Epithelial-stromal interaction protein 1 (314 aa).

Disordered regions lie at residues 1-72 (MYTR…PNES), 227-272 (WAGS…RAQI), and 289-314 (QGKSQPGGLEQSGGCCNMNSTDSWGL). Residues 18–30 (SRDHAGAGQRREL) are compositionally biased toward basic and acidic residues. Residue Ser-39 is modified to Phosphoserine. A coiled-coil region spans residues 71-180 (ESRRQKIQRI…QEDIRRATFR (110 aa)). A compositionally biased stretch (basic and acidic residues) spans 232–272 (AHRDSPQKEDNPRLQKTRDGHQKNKLLETKGQHQEEERAQI). The span at 305 to 314 (NMNSTDSWGL) shows a compositional bias: polar residues.

Expressed in the spleen, with expression in T cells, B cells, natural killer cells and natural killer T cells and high expression in monocytes and macrophages.

Its function is as follows. Plays a role in M1 macrophage polarization and is required for the proper regulation of gene expression during M1 versus M2 macrophage differentiation. Might play a role in RELA/p65 and STAT1 phosphorylation and nuclear localization upon activation of macrophages. This is Epithelial-stromal interaction protein 1 (Epsti1) from Mus musculus (Mouse).